Consider the following 428-residue polypeptide: Serine--tRNA ligase (428 aa).

T235–E237 provides a ligand contact to L-serine. Residue R266–E268 participates in ATP binding. E289 contributes to the L-serine binding site. E353–S356 serves as a coordination point for ATP. S389 is an L-serine binding site.

Belongs to the class-II aminoacyl-tRNA synthetase family. Type-1 seryl-tRNA synthetase subfamily. As to quaternary structure, homodimer. The tRNA molecule binds across the dimer.

The protein resides in the cytoplasm. It carries out the reaction tRNA(Ser) + L-serine + ATP = L-seryl-tRNA(Ser) + AMP + diphosphate + H(+). It catalyses the reaction tRNA(Sec) + L-serine + ATP = L-seryl-tRNA(Sec) + AMP + diphosphate + H(+). Its pathway is aminoacyl-tRNA biosynthesis; selenocysteinyl-tRNA(Sec) biosynthesis; L-seryl-tRNA(Sec) from L-serine and tRNA(Sec): step 1/1. Functionally, catalyzes the attachment of serine to tRNA(Ser). Is also able to aminoacylate tRNA(Sec) with serine, to form the misacylated tRNA L-seryl-tRNA(Sec), which will be further converted into selenocysteinyl-tRNA(Sec). The polypeptide is Serine--tRNA ligase (Shewanella denitrificans (strain OS217 / ATCC BAA-1090 / DSM 15013)).